A 199-amino-acid polypeptide reads, in one-letter code: MIALLTGKLAYKSPEFIILDVNGVGYQVHIPFSTYYTLPAEGGALSLQIHTSVKEDAINLYGFRTQQEKELFQLLIGVSGVGPKLATGILSNSEPSELADSLVNGNLARLSAIPGIGKKTAERLVLELKEKMKKLGLAQPQAGGATAPAKQEIRDDVLSALINLGYKEAVVQKALAELKVTEDATVELVLKQALKILMK.

A domain I region spans residues 1–64 (MIALLTGKLA…EDAINLYGFR (64 aa)). The domain II stretch occupies residues 65–143 (TQQEKELFQL…KLGLAQPQAG (79 aa)). Residues 144–148 (GATAP) are flexible linker. Residues 149–199 (AKQEIRDDVLSALINLGYKEAVVQKALAELKVTEDATVELVLKQALKILMK) are domain III.

It belongs to the RuvA family. Homotetramer. Forms an RuvA(8)-RuvB(12)-Holliday junction (HJ) complex. HJ DNA is sandwiched between 2 RuvA tetramers; dsDNA enters through RuvA and exits via RuvB. An RuvB hexamer assembles on each DNA strand where it exits the tetramer. Each RuvB hexamer is contacted by two RuvA subunits (via domain III) on 2 adjacent RuvB subunits; this complex drives branch migration. In the full resolvosome a probable DNA-RuvA(4)-RuvB(12)-RuvC(2) complex forms which resolves the HJ.

It is found in the cytoplasm. In terms of biological role, the RuvA-RuvB-RuvC complex processes Holliday junction (HJ) DNA during genetic recombination and DNA repair, while the RuvA-RuvB complex plays an important role in the rescue of blocked DNA replication forks via replication fork reversal (RFR). RuvA specifically binds to HJ cruciform DNA, conferring on it an open structure. The RuvB hexamer acts as an ATP-dependent pump, pulling dsDNA into and through the RuvAB complex. HJ branch migration allows RuvC to scan DNA until it finds its consensus sequence, where it cleaves and resolves the cruciform DNA. In Geobacter sp. (strain M21), this protein is Holliday junction branch migration complex subunit RuvA.